The following is a 566-amino-acid chain: Proline--tRNA ligase (566 aa).

The protein belongs to the class-II aminoacyl-tRNA synthetase family. ProS type 1 subfamily. In terms of assembly, homodimer.

The protein resides in the cytoplasm. It carries out the reaction tRNA(Pro) + L-proline + ATP = L-prolyl-tRNA(Pro) + AMP + diphosphate. Its function is as follows. Catalyzes the attachment of proline to tRNA(Pro) in a two-step reaction: proline is first activated by ATP to form Pro-AMP and then transferred to the acceptor end of tRNA(Pro). As ProRS can inadvertently accommodate and process non-cognate amino acids such as alanine and cysteine, to avoid such errors it has two additional distinct editing activities against alanine. One activity is designated as 'pretransfer' editing and involves the tRNA(Pro)-independent hydrolysis of activated Ala-AMP. The other activity is designated 'posttransfer' editing and involves deacylation of mischarged Ala-tRNA(Pro). The misacylated Cys-tRNA(Pro) is not edited by ProRS. The chain is Proline--tRNA ligase from Bacillus cereus (strain G9842).